We begin with the raw amino-acid sequence, 296 residues long: Acetylglutamate kinase (296 aa).

Residues 67–68 (GG), Arg-89, and Asn-194 each bind substrate.

This sequence belongs to the acetylglutamate kinase family. ArgB subfamily.

The protein resides in the cytoplasm. The catalysed reaction is N-acetyl-L-glutamate + ATP = N-acetyl-L-glutamyl 5-phosphate + ADP. Its pathway is amino-acid biosynthesis; L-arginine biosynthesis; N(2)-acetyl-L-ornithine from L-glutamate: step 2/4. Functionally, catalyzes the ATP-dependent phosphorylation of N-acetyl-L-glutamate. In Brucella abortus (strain S19), this protein is Acetylglutamate kinase.